We begin with the raw amino-acid sequence, 803 residues long: Palmitoyl thioesterase CPT1C (803 aa).

Residues 1–52 (MAEAHQAVGFRPSLTSDGAEVELSAPVLQEIYLSGLRSWKRHLSRFWNDFLT) lie on the Cytoplasmic side of the membrane. Residues 53-75 (GVFPASPLSWLFLFSAIQLAWFL) traverse the membrane as a helical segment. Residues 76–103 (QLDPSLGLMEKIKELLPDWGGQHHGLRG) are Lumenal-facing. The chain crosses the membrane as a helical span at residues 104–126 (VLAAALFASCLWGALIFTLHVAL). Residues 127-803 (RLLLSYHGWL…SKASMTSTDF (677 aa)) lie on the Cytoplasmic side of the membrane. Catalysis depends on histidine 470, which acts as the Proton acceptor. Position 552-564 (552-564 (GKSFIRRCHLSSD)) interacts with CoA. The (R)-carnitine site is built by tyrosine 586, serine 588, and threonine 599. Residues 761-803 (LFQAGQHFKRRFRGSGKENSRHRCGFLSRQTGASKASMTSTDF) form a required for interaction with GRIA1 region. The tract at residues 772–803 (FRGSGKENSRHRCGFLSRQTGASKASMTSTDF) is disordered. Residues 788 to 803 (SRQTGASKASMTSTDF) are compositionally biased toward polar residues.

Belongs to the carnitine/choline acetyltransferase family. As to quaternary structure, peripherally associated with AMPAR complex. AMPAR complex consists of an inner core made of 4 pore-forming GluA/GRIA proteins (GRIA1, GRIA2, GRIA3 and GRIA4) and 4 major auxiliary subunits arranged in a twofold symmetry. One of the two pairs of distinct binding sites is occupied either by CNIH2, CNIH3 or CACNG2, CACNG3. The other harbors CACNG2, CACNG3, CACNG4, CACNG8 or GSG1L. This inner core of AMPAR complex is complemented by outer core constituents binding directly to the GluA/GRIA proteins at sites distinct from the interaction sites of the inner core constituents. Outer core constituents include at least PRRT1, PRRT2, CKAMP44/SHISA9, FRRS1L and NRN1. The proteins of the inner and outer core serve as a platform for other, more peripherally associated AMPAR constituents, including CPT1C. Alone or in combination, these auxiliary subunits control the gating and pharmacology of the AMPAR complex and profoundly impact their biogenesis and protein processing. Interacts with SACM1L; the interaction regulates SACM1L phosphatidylinositol-3-phosphatase activity and translocation to endoplasmic reticulum/trans Golgi network in a malonyl-CoA dependent manner. Interacts with ATL1. Expressed predominantly in brain and testis. Expressed in motor neurons.

Its subcellular location is the cell projection. The protein localises to the dendrite. It localises to the axon. The protein resides in the endoplasmic reticulum membrane. The enzyme catalyses S-hexadecanoyl-L-cysteinyl-[protein] + H2O = L-cysteinyl-[protein] + hexadecanoate + H(+). Palmitoyl thioesterase specifically expressed in the endoplasmic reticulum of neurons. Modulates the trafficking of the glutamate receptor, AMPAR, to plasma membrane through depalmitoylation of GRIA1. Also regulates AMPR trafficking through the regulation of SACM1L phosphatidylinositol-3-phosphatase activity by interaction in a malonyl-CoA dependent manner. Binds malonyl-CoA and couples malonyl-CoA to ceramide levels, necessary for proper spine maturation and contributing to systemic energy homeostasis and appetite control. Binds to palmitoyl-CoA, but does not have carnitine palmitoyltransferase 1 catalytic activity or at very low levels. The sequence is that of Palmitoyl thioesterase CPT1C from Homo sapiens (Human).